Reading from the N-terminus, the 154-residue chain is uncharacterized protein (154 aa).

The next 2 helical transmembrane spans lie at 19 to 39 (LFAY…GLLL) and 51 to 71 (ADQV…LLFA).

It is found in the cell membrane. This is an uncharacterized protein from Mycobacterium tuberculosis (strain CDC 1551 / Oshkosh).